We begin with the raw amino-acid sequence, 296 residues long: ATP synthase gamma chain (296 aa).

It belongs to the ATPase gamma chain family. In terms of assembly, F-type ATPases have 2 components, CF(1) - the catalytic core - and CF(0) - the membrane proton channel. CF(1) has five subunits: alpha(3), beta(3), gamma(1), delta(1), epsilon(1). CF(0) has three main subunits: a, b and c.

Its subcellular location is the cell inner membrane. Its function is as follows. Produces ATP from ADP in the presence of a proton gradient across the membrane. The gamma chain is believed to be important in regulating ATPase activity and the flow of protons through the CF(0) complex. The sequence is that of ATP synthase gamma chain from Methylorubrum extorquens (strain PA1) (Methylobacterium extorquens).